Consider the following 136-residue polypeptide: NADPH-dependent 7-cyano-7-deazaguanine reductase (136 aa).

Residue Cys53 is the Thioimide intermediate of the active site. Residue Asp60 is the Proton donor of the active site. Substrate-binding positions include 75-77 and 94-95; these read VEL and HE.

This sequence belongs to the GTP cyclohydrolase I family. QueF type 1 subfamily.

Its subcellular location is the cytoplasm. The enzyme catalyses 7-aminomethyl-7-carbaguanine + 2 NADP(+) = 7-cyano-7-deazaguanine + 2 NADPH + 3 H(+). Its pathway is tRNA modification; tRNA-queuosine biosynthesis. Its function is as follows. Catalyzes the NADPH-dependent reduction of 7-cyano-7-deazaguanine (preQ0) to 7-aminomethyl-7-deazaguanine (preQ1). The polypeptide is NADPH-dependent 7-cyano-7-deazaguanine reductase (Trichormus variabilis (strain ATCC 29413 / PCC 7937) (Anabaena variabilis)).